A 250-amino-acid polypeptide reads, in one-letter code: Probable phosphatase VPA1527 (250 aa).

Zn(2+) contacts are provided by H8, H10, H16, H41, E74, H102, H132, D194, and H196.

It belongs to the PHP family. Zn(2+) serves as cofactor.

The chain is Probable phosphatase VPA1527 from Vibrio parahaemolyticus serotype O3:K6 (strain RIMD 2210633).